A 164-amino-acid polypeptide reads, in one-letter code: UPF0304 protein YfbU (164 aa).

It belongs to the UPF0304 family.

The sequence is that of UPF0304 protein YfbU from Salmonella choleraesuis (strain SC-B67).